We begin with the raw amino-acid sequence, 582 residues long: Putative phospholipase B-like 2 (582 aa).

Residues 1–42 (MTRLIRSKKQFLIRSLHSVFYYLGSLLHSTFEMNVFIGLLLA) form the signal peptide. N-linked (GlcNAc...) asparagine glycosylation is found at asparagine 91, asparagine 141, asparagine 178, asparagine 224, and asparagine 318. Cysteine 139 and cysteine 146 form a disulfide bridge. Cysteine 480 and cysteine 482 are joined by a disulfide. Asparagine 502 is a glycosylation site (N-linked (GlcNAc...) asparagine).

Belongs to the phospholipase B-like family.

The protein localises to the secreted. In terms of biological role, putative phospholipase. The protein is Putative phospholipase B-like 2 of Caenorhabditis elegans.